The primary structure comprises 110 residues: Protein YcgL (110 aa).

One can recognise a YcgL domain in the interval 14 to 98; it reads MFCVIYRSSK…PPEDLLKQHL (85 aa). Residues 87-110 are disordered; the sequence is PPPPEDLLKQHLSSVGQNTSPADR. Positions 97-110 are enriched in polar residues; it reads HLSSVGQNTSPADR.

The chain is Protein YcgL from Salmonella choleraesuis (strain SC-B67).